We begin with the raw amino-acid sequence, 137 residues long: Nucleoside diphosphate kinase (137 aa).

6 residues coordinate ATP: Lys-11, Phe-59, Arg-87, Thr-93, Arg-104, and Asn-114. The Pros-phosphohistidine intermediate role is filled by His-117.

Belongs to the NDK family. In terms of assembly, homotetramer. The cofactor is Mg(2+).

The protein resides in the cytoplasm. The enzyme catalyses a 2'-deoxyribonucleoside 5'-diphosphate + ATP = a 2'-deoxyribonucleoside 5'-triphosphate + ADP. It catalyses the reaction a ribonucleoside 5'-diphosphate + ATP = a ribonucleoside 5'-triphosphate + ADP. Its function is as follows. Major role in the synthesis of nucleoside triphosphates other than ATP. The ATP gamma phosphate is transferred to the NDP beta phosphate via a ping-pong mechanism, using a phosphorylated active-site intermediate. The protein is Nucleoside diphosphate kinase of Frankia casuarinae (strain DSM 45818 / CECT 9043 / HFP020203 / CcI3).